Consider the following 487-residue polypeptide: Protein nucleotidyltransferase YdiU (487 aa).

ATP-binding residues include glycine 90, glycine 92, arginine 93, lysine 113, aspartate 125, glycine 126, arginine 176, and arginine 183. Residue aspartate 252 is the Proton acceptor of the active site. Asparagine 253 and aspartate 262 together coordinate Mg(2+). Aspartate 262 provides a ligand contact to ATP.

This sequence belongs to the SELO family. The cofactor is Mg(2+). Mn(2+) serves as cofactor.

The catalysed reaction is L-seryl-[protein] + ATP = 3-O-(5'-adenylyl)-L-seryl-[protein] + diphosphate. It catalyses the reaction L-threonyl-[protein] + ATP = 3-O-(5'-adenylyl)-L-threonyl-[protein] + diphosphate. The enzyme catalyses L-tyrosyl-[protein] + ATP = O-(5'-adenylyl)-L-tyrosyl-[protein] + diphosphate. It carries out the reaction L-histidyl-[protein] + UTP = N(tele)-(5'-uridylyl)-L-histidyl-[protein] + diphosphate. The catalysed reaction is L-seryl-[protein] + UTP = O-(5'-uridylyl)-L-seryl-[protein] + diphosphate. It catalyses the reaction L-tyrosyl-[protein] + UTP = O-(5'-uridylyl)-L-tyrosyl-[protein] + diphosphate. Functionally, nucleotidyltransferase involved in the post-translational modification of proteins. It can catalyze the addition of adenosine monophosphate (AMP) or uridine monophosphate (UMP) to a protein, resulting in modifications known as AMPylation and UMPylation. This is Protein nucleotidyltransferase YdiU from Pseudomonas fluorescens (strain Pf0-1).